Here is a 208-residue protein sequence, read N- to C-terminus: Uracil phosphoribosyltransferase (208 aa).

5-phospho-alpha-D-ribose 1-diphosphate contacts are provided by residues Arg78, Arg103, and 130–138 (DPMLATGGS). Residues Ile193 and 198 to 200 (GDA) contribute to the uracil site. 5-phospho-alpha-D-ribose 1-diphosphate is bound at residue Asp199.

Belongs to the UPRTase family. It depends on Mg(2+) as a cofactor.

It carries out the reaction UMP + diphosphate = 5-phospho-alpha-D-ribose 1-diphosphate + uracil. Its pathway is pyrimidine metabolism; UMP biosynthesis via salvage pathway; UMP from uracil: step 1/1. With respect to regulation, allosterically activated by GTP. Catalyzes the conversion of uracil and 5-phospho-alpha-D-ribose 1-diphosphate (PRPP) to UMP and diphosphate. The chain is Uracil phosphoribosyltransferase from Shewanella denitrificans (strain OS217 / ATCC BAA-1090 / DSM 15013).